The primary structure comprises 168 residues: Zinc-finger homeodomain protein 14 (168 aa).

The ZF-HD dimerization-type; degenerate zinc finger occupies 7-51 (YRECMRNHAAKLGSYAIDGCREYSQPSTGDLCVACGCHRSYHRRI). Residues 76-103 (ARLKWKTAEERNEEEEDDTEETSTEEKM) are a coiled coil. Positions 82 to 112 (TAEERNEEEEDDTEETSTEEKMTVQRRRKSK) are disordered. Over residues 86–98 (RNEEEEDDTEETS) the composition is skewed to acidic residues. The homeobox DNA-binding region spans 106–168 (QRRRKSKFTA…WVNNNKKFYH (63 aa)).

As to quaternary structure, homo- and heterodimer with other ZFHD proteins. Interacts with ZHD11. As to expression, mostly expressed in flowers and stems.

The protein resides in the nucleus. Its function is as follows. Putative transcription factor. The polypeptide is Zinc-finger homeodomain protein 14 (ZHD14) (Arabidopsis thaliana (Mouse-ear cress)).